The sequence spans 103 residues: KRLLKDLSIEINQVIPEGGSVENLRQLPKAWFNLVPYREVGLMTAKYLEKEFGMSYISITPMGVVDIANCIRQMEERINIMSPILLNRRVNYEPYINEQTRFI.

The protein belongs to the ChlB/BchB/BchZ family. Protochlorophyllide reductase is composed of three subunits; ChlL, ChlN and ChlB. Forms a heterotetramer of two ChlB and two ChlN subunits. [4Fe-4S] cluster serves as cofactor.

It is found in the plastid. Its subcellular location is the chloroplast. The enzyme catalyses chlorophyllide a + oxidized 2[4Fe-4S]-[ferredoxin] + 2 ADP + 2 phosphate = protochlorophyllide a + reduced 2[4Fe-4S]-[ferredoxin] + 2 ATP + 2 H2O. It functions in the pathway porphyrin-containing compound metabolism; chlorophyll biosynthesis (light-independent). Functionally, component of the dark-operative protochlorophyllide reductase (DPOR) that uses Mg-ATP and reduced ferredoxin to reduce ring D of protochlorophyllide (Pchlide) to form chlorophyllide a (Chlide). This reaction is light-independent. The NB-protein (ChlN-ChlB) is the catalytic component of the complex. This Bazzania trilobata (Greater whipwort) protein is Light-independent protochlorophyllide reductase subunit B (chlB).